The following is a 174-amino-acid chain: Repair DNA polymerase X (174 aa).

The interval 42 to 51 is involved in ssDNA binding; that stretch reads REEKMLNDVD. Residues Asp49 and Asp51 each coordinate Mg(2+). Cys81 and Cys86 are disulfide-bonded. Asp100 is a Mg(2+) binding site.

Belongs to the DNA polymerase type-X family. Requires Mg(2+) as cofactor.

It localises to the virion. It carries out the reaction DNA(n) + a 2'-deoxyribonucleoside 5'-triphosphate = DNA(n+1) + diphosphate. In terms of biological role, error-prone polymerase lacking a proofreading 3'-5' exonuclease which catalyzes the gap-filling reaction during the DNA repair process. Specifically binds intermediates in the single-nucleotide base-excision repair process. Also catalyzes DNA polymerization with low nucleotide-insertion fidelity. Probably acts as a strategic DNA mutase, which gives rise to a rapid emergence of variants. Generates mismatched G-G pairs, in that case, the polymerase first binds the deoxynucleotide followed by mismatch formation. Together with the viral DNA ligase, fills the single nucleotide gaps generated by the AP endonuclease. Binds DNA with high affinity via the helix alphaE. This chain is Repair DNA polymerase X, found in African swine fever virus (isolate Tick/Malawi/Lil 20-1/1983) (ASFV).